A 121-amino-acid polypeptide reads, in one-letter code: Putative ferredoxin (121 aa).

This sequence to E.coli YkgJ.

The sequence is that of Putative ferredoxin from Acinetobacter calcoaceticus.